The chain runs to 90 residues: U7-theraphotoxin-Hhn1a 6 (90 aa).

A signal peptide spans 1–19; it reads MKTAIFTVVLALAVFAVLS. A propeptide spanning residues 20–50 is cleaved from the precursor; the sequence is FGWEANEKALSEEFTELIHEKEAASEAEARE. Disulfide bonds link cysteine 51–cysteine 65, cysteine 58–cysteine 70, and cysteine 64–cysteine 81.

The protein belongs to the neurotoxin 10 (Hwtx-1) family. 13 (Hntx-13) subfamily. As to expression, expressed by the venom gland.

The protein resides in the secreted. Its function is as follows. Ion channel inhibitor. The sequence is that of U7-theraphotoxin-Hhn1a 6 from Cyriopagopus hainanus (Chinese bird spider).